The chain runs to 476 residues: UDP-N-acetylmuramate--L-alanine ligase (476 aa).

126–132 (GAHGKTT) provides a ligand contact to ATP.

Belongs to the MurCDEF family.

It is found in the cytoplasm. It catalyses the reaction UDP-N-acetyl-alpha-D-muramate + L-alanine + ATP = UDP-N-acetyl-alpha-D-muramoyl-L-alanine + ADP + phosphate + H(+). It functions in the pathway cell wall biogenesis; peptidoglycan biosynthesis. In terms of biological role, cell wall formation. The sequence is that of UDP-N-acetylmuramate--L-alanine ligase from Psychrobacter sp. (strain PRwf-1).